Consider the following 299-residue polypeptide: 4-hydroxy-tetrahydrodipicolinate synthase (299 aa).

Thr-44 is a pyruvate binding site. Tyr-133 acts as the Proton donor/acceptor in catalysis. Lys-162 functions as the Schiff-base intermediate with substrate in the catalytic mechanism. Ile-204 lines the pyruvate pocket.

It belongs to the DapA family. As to quaternary structure, homotetramer; dimer of dimers.

The protein localises to the cytoplasm. The enzyme catalyses L-aspartate 4-semialdehyde + pyruvate = (2S,4S)-4-hydroxy-2,3,4,5-tetrahydrodipicolinate + H2O + H(+). Its pathway is amino-acid biosynthesis; L-lysine biosynthesis via DAP pathway; (S)-tetrahydrodipicolinate from L-aspartate: step 3/4. Its function is as follows. Catalyzes the condensation of (S)-aspartate-beta-semialdehyde [(S)-ASA] and pyruvate to 4-hydroxy-tetrahydrodipicolinate (HTPA). This is 4-hydroxy-tetrahydrodipicolinate synthase from Thermus thermophilus (strain ATCC BAA-163 / DSM 7039 / HB27).